Here is a 142-residue protein sequence, read N- to C-terminus: Large ribosomal subunit protein uL11 (142 aa).

Belongs to the universal ribosomal protein uL11 family. In terms of assembly, part of the ribosomal stalk of the 50S ribosomal subunit. Interacts with L10 and the large rRNA to form the base of the stalk. L10 forms an elongated spine to which L12 dimers bind in a sequential fashion forming a multimeric L10(L12)X complex. In terms of processing, one or more lysine residues are methylated.

Forms part of the ribosomal stalk which helps the ribosome interact with GTP-bound translation factors. This chain is Large ribosomal subunit protein uL11, found in Bradyrhizobium sp. (strain BTAi1 / ATCC BAA-1182).